A 481-amino-acid chain; its full sequence is Ribulose bisphosphate carboxylase large chain (481 aa).

The propeptide occupies 1-2 (MS). Residue Pro3 is modified to N-acetylproline. At Lys14 the chain carries N6,N6,N6-trimethyllysine. Residues Asn123 and Thr173 each contribute to the substrate site. The active-site Proton acceptor is Lys175. Lys177 contributes to the substrate binding site. Positions 201, 203, and 204 each coordinate Mg(2+). Lys201 carries the post-translational modification N6-carboxylysine. The Proton acceptor role is filled by His294. Substrate-binding residues include Arg295, His327, and Ser379.

The protein belongs to the RuBisCO large chain family. Type I subfamily. In terms of assembly, heterohexadecamer of 8 large chains and 8 small chains; disulfide-linked. The disulfide link is formed within the large subunit homodimers. Mg(2+) is required as a cofactor. Post-translationally, the disulfide bond which can form in the large chain dimeric partners within the hexadecamer appears to be associated with oxidative stress and protein turnover.

It is found in the plastid. The enzyme catalyses 2 (2R)-3-phosphoglycerate + 2 H(+) = D-ribulose 1,5-bisphosphate + CO2 + H2O. The catalysed reaction is D-ribulose 1,5-bisphosphate + O2 = 2-phosphoglycolate + (2R)-3-phosphoglycerate + 2 H(+). Functionally, ruBisCO catalyzes two reactions: the carboxylation of D-ribulose 1,5-bisphosphate, the primary event in carbon dioxide fixation, as well as the oxidative fragmentation of the pentose substrate in the photorespiration process. Both reactions occur simultaneously and in competition at the same active site. This chain is Ribulose bisphosphate carboxylase large chain, found in Cuscuta sandwichiana (Kauna'oa).